The chain runs to 653 residues: Phospholipid-transporting ATPase VD (653 aa).

Residues 1–375 (MACNLCYEAE…GHWCYTRLSN (375 aa)) are Cytoplasmic-facing. ATP is bound by residues Glu-14, Phe-56, Lys-80, Arg-124, Thr-204, Gly-205, Asp-206, 259 to 266 (GLIITGKT), Arg-293, and Lys-299. Asp-319 contributes to the Mg(2+) binding site. Asn-322 and Asp-323 together coordinate ATP. Residue Asp-323 coordinates Mg(2+). The chain crosses the membrane as a helical span at residues 376-396 (MILYFFYKNVAYVNLLFWYQF). Residues 397-407 (FCGFSGTSMTD) are Exoplasmic loop-facing. Residues 408–428 (YWVLIFFNLLFTSAPPVIYGV) form a helical membrane-spanning segment. Residues 429 to 458 (LEKDVSAETLMQLPELYKSGQKSEAYLPHT) are Cytoplasmic-facing. The chain crosses the membrane as a helical span at residues 459 to 480 (FWITLLDAFYQSLVCFFVPYFT). Residues 481–487 (YQGSDID) are Exoplasmic loop-facing. A helical transmembrane segment spans residues 488–510 (IFAFGNPLNTAALFIILLHLIIE). At 511–516 (SKSLTW) the chain is on the cytoplasmic side. A helical membrane pass occupies residues 517–537 (IHMLVITGSILSYFLFAIVFG). The Exoplasmic loop portion of the chain corresponds to 538–555 (AMCVTCNPPSNPYWIMQE). The helical transmembrane segment at 556-580 (HVLDPVFYLVCILTTCIALLPRFVY) threads the bilayer. Topologically, residues 581–653 (RGAGKMNQVT…AFEMARPCKD (73 aa)) are cytoplasmic.

This sequence belongs to the cation transport ATPase (P-type) (TC 3.A.3) family. Type IV subfamily. In terms of assembly, component of a P4-ATPase flippase complex which consists of a catalytic alpha subunit ATP10A and an accessory beta subunit TMEM30A. Requires Mg(2+) as cofactor. Post-translationally, autophosphorylated at the conserved aspartate of the P-type ATPase signature sequence.

The protein resides in the cell membrane. It localises to the endoplasmic reticulum membrane. It catalyses the reaction ATP + H2O + phospholipidSide 1 = ADP + phosphate + phospholipidSide 2.. The enzyme catalyses a beta-D-glucosyl-(1&lt;-&gt;1')-N-acylsphing-4-enine(out) + ATP + H2O = a beta-D-glucosyl-(1&lt;-&gt;1')-N-acylsphing-4-enine(in) + ADP + phosphate + H(+). Its function is as follows. Catalytic component of a P4-ATPase flippase complex, which catalyzes the hydrolysis of ATP coupled to the transport of glucosylceramide (GlcCer) from the outer to the inner leaflet of the plasma membrane. The protein is Phospholipid-transporting ATPase VD (ATP10D) of Macaca fascicularis (Crab-eating macaque).